The following is a 674-amino-acid chain: U-box domain-containing protein 16 (674 aa).

In terms of domain architecture, U-box spans 273–347; sequence NIPADFRCPI…VLWCRDQKIP (75 aa). ARM repeat units lie at residues 399–438, 441–481, and 484–523; these read TVAR…NLSI, QNKT…SLAG, and AYRR…NLVA.

It catalyses the reaction S-ubiquitinyl-[E2 ubiquitin-conjugating enzyme]-L-cysteine + [acceptor protein]-L-lysine = [E2 ubiquitin-conjugating enzyme]-L-cysteine + N(6)-ubiquitinyl-[acceptor protein]-L-lysine.. Its pathway is protein modification; protein ubiquitination. Functionally, functions as an E3 ubiquitin ligase. This Arabidopsis thaliana (Mouse-ear cress) protein is U-box domain-containing protein 16 (PUB16).